A 154-amino-acid chain; its full sequence is Ferredoxin C 1, chloroplastic (154 aa).

The N-terminal 56 residues, 1–56, are a transit peptide targeting the chloroplast; the sequence is MATLPLPTQTSTISLPKPYLSNSFSFPLRNATLSTTTNRRNFLTTGRIIARAYKVV. One can recognise a 2Fe-2S ferredoxin-type domain in the interval 57–142; it reads VEHDGKTTEL…DCHIKMIPEE (86 aa). [2Fe-2S] cluster-binding residues include Cys-89, Cys-94, Cys-97, and Cys-126.

The protein belongs to the 2Fe2S plant-type ferredoxin family. [2Fe-2S] cluster serves as cofactor.

The protein resides in the plastid. It is found in the chloroplast. Functionally, ferredoxins are iron-sulfur proteins that transfer electrons in a wide variety of metabolic reactions. Mediates alternative electron partitioning in conditions of acceptor limitation at photosystem I. Accepts electrons from photosystem I (PSI) and is capable of electron transfer with FNR, but cannot support photoreduction of NADP(+). The chain is Ferredoxin C 1, chloroplastic from Arabidopsis thaliana (Mouse-ear cress).